We begin with the raw amino-acid sequence, 1368 residues long: DNA-directed RNA polymerase subunit beta (1368 aa).

It belongs to the RNA polymerase beta chain family. In terms of assembly, the RNAP catalytic core consists of 2 alpha, 1 beta, 1 beta' and 1 omega subunit. When a sigma factor is associated with the core the holoenzyme is formed, which can initiate transcription.

The enzyme catalyses RNA(n) + a ribonucleoside 5'-triphosphate = RNA(n+1) + diphosphate. In terms of biological role, DNA-dependent RNA polymerase catalyzes the transcription of DNA into RNA using the four ribonucleoside triphosphates as substrates. In Burkholderia mallei (strain SAVP1), this protein is DNA-directed RNA polymerase subunit beta.